The chain runs to 428 residues: Phosphoribosylamine--glycine ligase (428 aa).

Residues 109–316 form the ATP-grasp domain; it reads KDFLHRHGIP…LVELCLAALD (208 aa). 135–196 provides a ligand contact to ATP; that stretch reads LRQVGAPVVV…EEFLTGEEAS (62 aa). A disordered region spans residues 211–235; it reads SSQDHKARDDGDRGPNTGGMGAYSP. Residues 213 to 223 are compositionally biased toward basic and acidic residues; that stretch reads QDHKARDDGDR. Glu-286 and Asn-288 together coordinate Mg(2+).

It belongs to the GARS family. Requires Mg(2+) as cofactor. The cofactor is Mn(2+).

The catalysed reaction is 5-phospho-beta-D-ribosylamine + glycine + ATP = N(1)-(5-phospho-beta-D-ribosyl)glycinamide + ADP + phosphate + H(+). It participates in purine metabolism; IMP biosynthesis via de novo pathway; N(1)-(5-phospho-D-ribosyl)glycinamide from 5-phospho-alpha-D-ribose 1-diphosphate: step 2/2. The chain is Phosphoribosylamine--glycine ligase (purD) from Allochromatium vinosum (strain ATCC 17899 / DSM 180 / NBRC 103801 / NCIMB 10441 / D) (Chromatium vinosum).